Consider the following 146-residue polypeptide: Holo-[acyl-carrier-protein] synthase (146 aa).

Positions 9 and 63 each coordinate Mg(2+).

The protein belongs to the P-Pant transferase superfamily. AcpS family. Mg(2+) serves as cofactor.

It is found in the cytoplasm. The enzyme catalyses apo-[ACP] + CoA = holo-[ACP] + adenosine 3',5'-bisphosphate + H(+). Its function is as follows. Transfers the 4'-phosphopantetheine moiety from coenzyme A to a Ser of acyl-carrier-protein. This is Holo-[acyl-carrier-protein] synthase from Burkholderia multivorans (strain ATCC 17616 / 249).